We begin with the raw amino-acid sequence, 920 residues long: Urea transporter 2 (920 aa).

A disordered region spans residues 25–57 (FTSPSWPSTSPDTHPALPLLEMPEEKDLRSSNE). Positions 26-39 (TSPSWPSTSPDTHP) are enriched in low complexity. The span at 47–57 (PEEKDLRSSNE) shows a compositional bias: basic and acidic residues. 9 consecutive transmembrane segments (helical) span residues 151–170 (WWTI…ALAL), 176–196 (AIAS…MAVF), 204–224 (WWLL…SSAL), 233–253 (LPVF…ATGH), 272–291 (ITWT…VGVG), 302–322 (GGVF…HAAI), 346–366 (WSYN…ALTW), 370–390 (LLAL…SNIM), and 392–412 (VVGV…FLLL). Positions 446–467 (EKAPSGGGGEHPPTAGPKVEEG) are disordered. Ser477 is modified (phosphoserine). A run of 4 helical transmembrane segments spans residues 600–620 (GILI…SGCL), 638–658 (AIAA…MAVF), 666–686 (WWLL…SSAL), and 695–715 (LPVF…ATGH). Asn733 carries an N-linked (GlcNAc...) asparagine glycan. 4 consecutive transmembrane segments (helical) span residues 764–784 (GGIF…HAAI), 803–823 (IYFG…GGMF), 832–852 (LLAI…ANML), and 854–874 (VFGL…FLLL).

It belongs to the urea transporter family. In terms of assembly, interacts with SNAPIN which enhances its urea transport activity. In terms of tissue distribution, epressed in the inner medulla of the kidney (at protein level). As to expression, expressed in the kidney.

It is found in the apical cell membrane. Its subcellular location is the cell membrane. It catalyses the reaction urea(in) = urea(out). Its activity is regulated as follows. Inhibited by phloretin. Its function is as follows. Mediates the transport of urea driven by a concentration gradient across the cell membrane of the renal inner medullary collecting duct which is critical to the urinary concentrating mechanism. Mediates the transport of urea driven by a concentration gradient across the cell membrane of the kidney inner medullary collecting duct which is critical to the urinary concentrating mechanism. The polypeptide is Urea transporter 2 (SLC14A2) (Homo sapiens (Human)).